A 293-amino-acid chain; its full sequence is Shikimate dehydrogenase (NADP(+)) (293 aa).

Shikimate-binding positions include 20 to 22 and T72; that span reads SLT. Residue K76 is the Proton acceptor of the active site. The shikimate site is built by N97 and D112. Residues 136 to 140 and I230 each bind NADP(+); that span reads GAGGA. Residue Y232 participates in shikimate binding. Position 253 (G253) interacts with NADP(+).

This sequence belongs to the shikimate dehydrogenase family. As to quaternary structure, homodimer.

It carries out the reaction shikimate + NADP(+) = 3-dehydroshikimate + NADPH + H(+). Its pathway is metabolic intermediate biosynthesis; chorismate biosynthesis; chorismate from D-erythrose 4-phosphate and phosphoenolpyruvate: step 4/7. In terms of biological role, involved in the biosynthesis of the chorismate, which leads to the biosynthesis of aromatic amino acids. Catalyzes the reversible NADPH linked reduction of 3-dehydroshikimate (DHSA) to yield shikimate (SA). The sequence is that of Shikimate dehydrogenase (NADP(+)) from Arthrobacter sp. (strain FB24).